The sequence spans 475 residues: Trifunctional enzyme subunit beta, mitochondrial (475 aa).

The N-terminal 34 residues, 1–34, are a transit peptide targeting the mitochondrion; it reads MISLLTYTLKNLPNTSKWALRFCMRPLSSSSQLQ. Lys-73 bears the N6-acetyllysine; alternate mark. An N6-succinyllysine; alternate modification is found at Lys-73. Catalysis depends on Cys-139, which acts as the Acyl-thioester intermediate. Residues 174–221 lie within the membrane without spanning it; that stretch reads IRHSRKMRKMMLDLNKAKTLAQRLSIISKFRLNFLSPELPAVSEFSTS. Lys-189 is modified (N6-acetyllysine; alternate). Lys-189 bears the N6-succinyllysine; alternate mark. Lys-191 and Lys-292 each carry N6-succinyllysine. Lys-294 is modified (N6-acetyllysine; alternate). N6-succinyllysine; alternate is present on Lys-294. An N6-acetyllysine modification is found at Lys-299. An N6-acetyllysine; alternate modification is found at Lys-333. Residue Lys-333 is modified to N6-succinyllysine; alternate. Lys-349 and Lys-362 each carry N6-acetyllysine. Cys-459 serves as the catalytic Proton donor/acceptor.

This sequence belongs to the thiolase-like superfamily. Thiolase family. As to quaternary structure, heterotetramer of 2 alpha/HADHA and 2 beta/HADHB subunits; forms the mitochondrial trifunctional enzyme. Also purified as higher order heterooligomers including a 4 alpha/HADHA and 4 beta/HADHB heterooligomer which physiological significance remains unclear. The mitochondrial trifunctional enzyme interacts with MTLN. Interacts with RSAD2/viperin.

It is found in the mitochondrion. The protein resides in the mitochondrion inner membrane. It localises to the mitochondrion outer membrane. The protein localises to the endoplasmic reticulum. The catalysed reaction is an acyl-CoA + acetyl-CoA = a 3-oxoacyl-CoA + CoA. The enzyme catalyses butanoyl-CoA + acetyl-CoA = 3-oxohexanoyl-CoA + CoA. It carries out the reaction hexanoyl-CoA + acetyl-CoA = 3-oxooctanoyl-CoA + CoA. It catalyses the reaction octanoyl-CoA + acetyl-CoA = 3-oxodecanoyl-CoA + CoA. The catalysed reaction is decanoyl-CoA + acetyl-CoA = 3-oxododecanoyl-CoA + CoA. The enzyme catalyses dodecanoyl-CoA + acetyl-CoA = 3-oxotetradecanoyl-CoA + CoA. It carries out the reaction tetradecanoyl-CoA + acetyl-CoA = 3-oxohexadecanoyl-CoA + CoA. It functions in the pathway lipid metabolism; fatty acid beta-oxidation. Its function is as follows. Mitochondrial trifunctional enzyme catalyzes the last three of the four reactions of the mitochondrial beta-oxidation pathway. The mitochondrial beta-oxidation pathway is the major energy-producing process in tissues and is performed through four consecutive reactions breaking down fatty acids into acetyl-CoA. Among the enzymes involved in this pathway, the trifunctional enzyme exhibits specificity for long-chain fatty acids. Mitochondrial trifunctional enzyme is a heterotetrameric complex composed of two proteins, the trifunctional enzyme subunit alpha/HADHA carries the 2,3-enoyl-CoA hydratase and the 3-hydroxyacyl-CoA dehydrogenase activities, while the trifunctional enzyme subunit beta/HADHB described here bears the 3-ketoacyl-CoA thiolase activity. This is Trifunctional enzyme subunit beta, mitochondrial (HADHB) from Bos taurus (Bovine).